A 407-amino-acid chain; its full sequence is Zinc finger protein 260 (407 aa).

A disordered region spans residues 1–21; the sequence is MLESLQPESELLHDEPDPGEK. Residues 10–21 are compositionally biased toward basic and acidic residues; it reads ELLHDEPDPGEK. The C2H2-type 1 zinc-finger motif lies at 23–45; sequence YECDECRKTFSLEQHFVEHKKTH. The C2H2-type 2; degenerate zinc-finger motif lies at 51–73; sequence PECTGCGEEFSKASSLTRHLRSR. 11 consecutive C2H2-type zinc fingers follow at residues 79-101, 131-153, 159-181, 187-209, 215-237, 243-265, 271-293, 299-321, 327-349, 355-377, and 383-405; these read YKCGNCGRTFSQRGNFLSHQKQH, YACKECGKAFNGKSYLKEHEKIH, FECNQCGRAFSQKQYLIKHQNVH, FKCNECGKAFSQKENLIIHQRIH, YECKGCGKAFIQKSSLIRHQRSH, YTCKECGKAFSGKSNLTEHEKIH, YKCNECGTIFRQKQYLIKHHNIH, YECNKCGKAFSRITSLIVHVRIH, YECKVCGKAFCQSSSLTVHMRSH, YGCNECGKAFSQFSTLALHMRIH, and YQCSECGKAFSQKSHHIRHQRIH.

It belongs to the krueppel C2H2-type zinc-finger protein family. Binds DNA. Interacts with GATA4. In terms of tissue distribution, expressed in both embryonic, fetal and adult heart. Also expressed in lung, skeletal muscle and adrenal glands.

It is found in the nucleus. Functionally, transcription factor that acts as a cardiac regulator and an effector of alpha1-adrenergic signaling. Binds to PE response elements (PERE) present in the promoter of genes such as ANF/NPPA and acts as a direct transcriptional activator of NPPA. Also acts as a cofactor with GATA4, a key cardiac regulator. This chain is Zinc finger protein 260 (Znf260), found in Rattus norvegicus (Rat).